Here is a 168-residue protein sequence, read N- to C-terminus: SsrA-binding protein (168 aa).

Residues 1 to 20 form a disordered region; the sequence is MAAQSKQAKPSGKQGGKKII.

It belongs to the SmpB family.

It localises to the cytoplasm. Its function is as follows. Required for rescue of stalled ribosomes mediated by trans-translation. Binds to transfer-messenger RNA (tmRNA), required for stable association of tmRNA with ribosomes. tmRNA and SmpB together mimic tRNA shape, replacing the anticodon stem-loop with SmpB. tmRNA is encoded by the ssrA gene; the 2 termini fold to resemble tRNA(Ala) and it encodes a 'tag peptide', a short internal open reading frame. During trans-translation Ala-aminoacylated tmRNA acts like a tRNA, entering the A-site of stalled ribosomes, displacing the stalled mRNA. The ribosome then switches to translate the ORF on the tmRNA; the nascent peptide is terminated with the 'tag peptide' encoded by the tmRNA and targeted for degradation. The ribosome is freed to recommence translation, which seems to be the essential function of trans-translation. This chain is SsrA-binding protein, found in Mycobacterium ulcerans (strain Agy99).